Reading from the N-terminus, the 329-residue chain is Glycerol-3-phosphate dehydrogenase [NAD(P)+] (329 aa).

NADPH is bound by residues Ser-13, Trp-14, His-34, and Lys-105. Sn-glycerol 3-phosphate contacts are provided by Lys-105, Gly-134, and Ser-136. Position 138 (Ala-138) interacts with NADPH. Sn-glycerol 3-phosphate is bound by residues Lys-189, Asp-242, Ser-252, Arg-253, and Asn-254. The Proton acceptor role is filled by Lys-189. Residue Arg-253 coordinates NADPH. The NADPH site is built by Val-277 and Glu-279.

Belongs to the NAD-dependent glycerol-3-phosphate dehydrogenase family.

Its subcellular location is the cytoplasm. It catalyses the reaction sn-glycerol 3-phosphate + NAD(+) = dihydroxyacetone phosphate + NADH + H(+). The catalysed reaction is sn-glycerol 3-phosphate + NADP(+) = dihydroxyacetone phosphate + NADPH + H(+). It participates in membrane lipid metabolism; glycerophospholipid metabolism. In terms of biological role, catalyzes the reduction of the glycolytic intermediate dihydroxyacetone phosphate (DHAP) to sn-glycerol 3-phosphate (G3P), the key precursor for phospholipid synthesis. This chain is Glycerol-3-phosphate dehydrogenase [NAD(P)+], found in Legionella pneumophila (strain Paris).